We begin with the raw amino-acid sequence, 272 residues long: Ribosomal RNA small subunit methyltransferase A (272 aa).

The S-adenosyl-L-methionine site is built by asparagine 27, leucine 29, glycine 54, glutamate 75, aspartate 97, and asparagine 117.

Belongs to the class I-like SAM-binding methyltransferase superfamily. rRNA adenine N(6)-methyltransferase family. RsmA subfamily.

It is found in the cytoplasm. It catalyses the reaction adenosine(1518)/adenosine(1519) in 16S rRNA + 4 S-adenosyl-L-methionine = N(6)-dimethyladenosine(1518)/N(6)-dimethyladenosine(1519) in 16S rRNA + 4 S-adenosyl-L-homocysteine + 4 H(+). Functionally, specifically dimethylates two adjacent adenosines (A1518 and A1519) in the loop of a conserved hairpin near the 3'-end of 16S rRNA in the 30S particle. May play a critical role in biogenesis of 30S subunits. The polypeptide is Ribosomal RNA small subunit methyltransferase A (Malacoplasma penetrans (strain HF-2) (Mycoplasma penetrans)).